A 158-amino-acid chain; its full sequence is Hypoxanthine DNA glycosylase (158 aa).

Asn39 is a catalytic residue.

It belongs to the uracil-DNA glycosylase (UDG) superfamily. Type 6 (HDG) family.

Its function is as follows. Excises hypoxanthine, a deamination product of adenine, from double-stranded DNA. Acts on double-stranded DNA containing G/I, T/I, A/I and C/I base pairs, but not on single-stranded inosine-containing DNA. Also has minor xanthine DNA glycosylase activity. Lacks any detectable uracil-DNA glycosylase activity. This Methanosarcina acetivorans (strain ATCC 35395 / DSM 2834 / JCM 12185 / C2A) protein is Hypoxanthine DNA glycosylase.